Reading from the N-terminus, the 463-residue chain is L-seryl-tRNA(Sec) selenium transferase (463 aa).

Lys-295 is subject to N6-(pyridoxal phosphate)lysine.

The protein belongs to the SelA family. As to quaternary structure, homodecamer; pentamer of dimers. Binds only one seryl-tRNA(Sec) per dimer. Pyridoxal 5'-phosphate is required as a cofactor.

It is found in the cytoplasm. It catalyses the reaction L-seryl-tRNA(Sec) + selenophosphate + H(+) = L-selenocysteinyl-tRNA(Sec) + phosphate. The protein operates within aminoacyl-tRNA biosynthesis; selenocysteinyl-tRNA(Sec) biosynthesis; selenocysteinyl-tRNA(Sec) from L-seryl-tRNA(Sec) (bacterial route): step 1/1. Its function is as follows. Converts seryl-tRNA(Sec) to selenocysteinyl-tRNA(Sec) required for selenoprotein biosynthesis. The protein is L-seryl-tRNA(Sec) selenium transferase of Salmonella enteritidis PT4 (strain P125109).